The chain runs to 910 residues: DNA mismatch repair protein MutS (910 aa).

Over residues 1–11 (MEAKVEEKEPE) the composition is skewed to basic and acidic residues. Residues 1 to 21 (MEAKVEEKEPEPVENAGPDAP) are disordered. 658-665 (GPNMGGKS) is a binding site for ATP.

Belongs to the DNA mismatch repair MutS family.

Its function is as follows. This protein is involved in the repair of mismatches in DNA. It is possible that it carries out the mismatch recognition step. This protein has a weak ATPase activity. In Brucella melitensis biotype 1 (strain ATCC 23456 / CCUG 17765 / NCTC 10094 / 16M), this protein is DNA mismatch repair protein MutS.